A 154-amino-acid polypeptide reads, in one-letter code: Cyclin-dependent protein kinase inhibitor SMR14 (154 aa).

Residues 1–111 (MSKIKIFHLF…RPPRKPKAIP (111 aa)) are disordered. Residues 24-37 (SLLVPSKSDSLDSS) show a composition bias toward low complexity. Residues 74–83 (KWECKDEESP) are compositionally biased toward basic and acidic residues.

Its function is as follows. Probable cyclin-dependent protein kinase (CDK) inhibitor that functions as a repressor of mitosis in the endoreduplication cell cycle. This is Cyclin-dependent protein kinase inhibitor SMR14 from Arabidopsis thaliana (Mouse-ear cress).